Consider the following 177-residue polypeptide: MATIGIFFGSDTGQTRKVAKLIHQKLDGIADAPLDVRRATREQFLSYPVLLLGTPTLGDGELPGVDAGSQYDSWQEFTNTLSEADLSGKTVALFGLGDQLNYSKNFVSAMRILYDLVIARGACVVGNWPREGYKFSFSAALLENNEFVGLPLDQENQYDLTEERIDTWLDKLKQAVL.

Residues 4-173 (IGIFFGSDTG…RIDTWLDKLK (170 aa)) enclose the Flavodoxin-like domain.

Belongs to the flavodoxin family. It depends on FMN as a cofactor.

In terms of biological role, low-potential electron donor to a number of redox enzymes. NifF is the electron donor to nitrogenase. In Enterobacter agglomerans (Erwinia herbicola), this protein is Flavodoxin (nifF).